A 119-amino-acid chain; its full sequence is Large ribosomal subunit protein uL22 (119 aa).

This sequence belongs to the universal ribosomal protein uL22 family. Part of the 50S ribosomal subunit.

In terms of biological role, this protein binds specifically to 23S rRNA; its binding is stimulated by other ribosomal proteins, e.g. L4, L17, and L20. It is important during the early stages of 50S assembly. It makes multiple contacts with different domains of the 23S rRNA in the assembled 50S subunit and ribosome. Its function is as follows. The globular domain of the protein is located near the polypeptide exit tunnel on the outside of the subunit, while an extended beta-hairpin is found that lines the wall of the exit tunnel in the center of the 70S ribosome. This is Large ribosomal subunit protein uL22 from Rickettsia akari (strain Hartford).